Here is a 152-residue protein sequence, read N- to C-terminus: Deoxyuridine 5'-triphosphate nucleotidohydrolase (152 aa).

Substrate is bound by residues 71–73 (RSG), Asn-84, 88–90 (LID), and Met-98.

This sequence belongs to the dUTPase family. Requires Mg(2+) as cofactor.

It carries out the reaction dUTP + H2O = dUMP + diphosphate + H(+). It functions in the pathway pyrimidine metabolism; dUMP biosynthesis; dUMP from dCTP (dUTP route): step 2/2. Functionally, this enzyme is involved in nucleotide metabolism: it produces dUMP, the immediate precursor of thymidine nucleotides and it decreases the intracellular concentration of dUTP so that uracil cannot be incorporated into DNA. This is Deoxyuridine 5'-triphosphate nucleotidohydrolase from Serratia proteamaculans (strain 568).